A 182-amino-acid polypeptide reads, in one-letter code: Adenine phosphoribosyltransferase (182 aa).

This sequence belongs to the purine/pyrimidine phosphoribosyltransferase family. As to quaternary structure, homodimer.

It is found in the cytoplasm. The catalysed reaction is AMP + diphosphate = 5-phospho-alpha-D-ribose 1-diphosphate + adenine. It participates in purine metabolism; AMP biosynthesis via salvage pathway; AMP from adenine: step 1/1. In terms of biological role, catalyzes a salvage reaction resulting in the formation of AMP, that is energically less costly than de novo synthesis. This Renibacterium salmoninarum (strain ATCC 33209 / DSM 20767 / JCM 11484 / NBRC 15589 / NCIMB 2235) protein is Adenine phosphoribosyltransferase.